Here is a 530-residue protein sequence, read N- to C-terminus: Ubiquitin carboxyl-terminal hydrolase 17-like protein 12 (530 aa).

A USP domain is found at 80 to 375 (AGLQNMGNTC…QAYVLFYIQK (296 aa)). The active-site Nucleophile is the Cys89. The Proton acceptor role is filled by His334. 2 stretches are compositionally biased toward basic and acidic residues: residues 382 to 392 (SESVSRGREPR) and 398 to 412 (DTDR…KRDH). Disordered stretches follow at residues 382-412 (SESV…KRDH) and 477-530 (NHHP…LVCQ). Positions 484–495 (SSLLKLSSTTPT) are enriched in low complexity. Positions 496-505 (HQESMNTGTL) are enriched in polar residues. A compositionally biased stretch (basic residues) spans 510-524 (GRARRSKGKNKHSKR).

The protein belongs to the peptidase C19 family. USP17 subfamily.

Its subcellular location is the nucleus. It is found in the endoplasmic reticulum. The enzyme catalyses Thiol-dependent hydrolysis of ester, thioester, amide, peptide and isopeptide bonds formed by the C-terminal Gly of ubiquitin (a 76-residue protein attached to proteins as an intracellular targeting signal).. Functionally, deubiquitinating enzyme that removes conjugated ubiquitin from specific proteins to regulate different cellular processes that may include cell proliferation, progression through the cell cycle, apoptosis, cell migration, and the cellular response to viral infection. This chain is Ubiquitin carboxyl-terminal hydrolase 17-like protein 12 (USP17L12), found in Homo sapiens (Human).